Reading from the N-terminus, the 160-residue chain is Lipoprotein signal peptidase (160 aa).

2 consecutive transmembrane segments (helical) span residues 60–80 (IEWL…AFFI) and 84–104 (LPFL…AGTV). Catalysis depends on residues D118 and D132. Residues 128-148 (FNIADSCLTVGVIGLLLLYIV) form a helical membrane-spanning segment.

Belongs to the peptidase A8 family.

It localises to the cell membrane. The enzyme catalyses Release of signal peptides from bacterial membrane prolipoproteins. Hydrolyzes -Xaa-Yaa-Zaa-|-(S,diacylglyceryl)Cys-, in which Xaa is hydrophobic (preferably Leu), and Yaa (Ala or Ser) and Zaa (Gly or Ala) have small, neutral side chains.. The protein operates within protein modification; lipoprotein biosynthesis (signal peptide cleavage). This protein specifically catalyzes the removal of signal peptides from prolipoproteins. The sequence is that of Lipoprotein signal peptidase from Dehalococcoides mccartyi (strain CBDB1).